We begin with the raw amino-acid sequence, 382 residues long: Galactokinase (382 aa).

Position 34-37 (Glu34–Asp37) interacts with substrate. Gly124–Ser130 contributes to the ATP binding site. Residues Ser130 and Glu162 each coordinate Mg(2+). Catalysis depends on Asp174, which acts as the Proton acceptor. Tyr223 is a binding site for substrate.

It belongs to the GHMP kinase family. GalK subfamily.

Its subcellular location is the cytoplasm. It carries out the reaction alpha-D-galactose + ATP = alpha-D-galactose 1-phosphate + ADP + H(+). Its pathway is carbohydrate metabolism; galactose metabolism. Its function is as follows. Catalyzes the transfer of the gamma-phosphate of ATP to D-galactose to form alpha-D-galactose-1-phosphate (Gal-1-P). The protein is Galactokinase of Salmonella paratyphi C (strain RKS4594).